The following is a 690-amino-acid chain: Rho guanine nucleotide exchange factor 4 (690 aa).

An ABR (APC-binding region) domain region spans residues 73–126; the sequence is KTQRKKLQKQAHVERRLHIGAVHKDGVKCWRKTIITSPESLNLPRRSHPLSQSA. The disordered stretch occupies residues 113 to 145; the sequence is LNLPRRSHPLSQSAPTGLNHMGWPEHTPGTAMP. One can recognise an SH3 domain in the interval 194–253; the sequence is GSVVCAEALWDHVTMDDQELGFKAGDVIEVMDATNREWWWGRVADGEGWFPASFVRLRVN. The tract at residues 257 to 282 is disordered; sequence PADDDAPLAGNSGAEDGGAEAQSSKD. A DH domain is found at 284-468; it reads MRTNVINEIL…KNVAQLINER (185 aa). In terms of domain architecture, PH spans 499 to 606; that stretch reads ELIYSGELTR…WLKAFARERE (108 aa).

Isoform 3 interacts with RHOA and RAC1, and (via ABR domain) with APC. Found in a complex consisting of ARHGEF4, APC and CTNNB1. As to expression, expressed at high levels in the brain, skeletal muscle and testis and at low levels in the kidney, lung, small intestine, ovary and prostate. Expression is aberrantly enhanced in most colorectal tumors.

Its subcellular location is the cytoplasm. The protein resides in the cell projection. It localises to the ruffle membrane. Functionally, acts as a guanine nucleotide exchange factor (GEF) for RHOA, RAC1 and CDC42 GTPases. Binding of APC may activate RAC1 GEF activity. The APC-ARHGEF4 complex seems to be involved in cell migration as well as in E-cadherin-mediated cell-cell adhesion. Required for MMP9 up-regulation via the JNK signaling pathway in colorectal tumor cells. Involved in tumor angiogenesis and may play a role in intestinal adenoma formation and tumor progression. This chain is Rho guanine nucleotide exchange factor 4 (ARHGEF4), found in Homo sapiens (Human).